A 78-amino-acid polypeptide reads, in one-letter code: Large ribosomal subunit protein bL28 (78 aa).

The tract at residues 1-21 (MSRVCQVTGKRPVSGNNRSHA) is disordered.

This sequence belongs to the bacterial ribosomal protein bL28 family.

This chain is Large ribosomal subunit protein bL28, found in Yersinia enterocolitica serotype O:8 / biotype 1B (strain NCTC 13174 / 8081).